Consider the following 959-residue polypeptide: MFGNNRPMFGGSNLSFGSNTSSFGGQQSQQPNSLFGNSNNNNNSTSNNAQSGFGGFTSAAGSNSNSLFGNNNTQNNGAFGQSMGATQNSPFGSLNSSNASNGNTFGGSSSMGSFGGNTNNAFNNNSNSTNSPFGFNKPNTGGTLFGSQNNNSAGTSSLFGGQSTSTTGTFGNTGSSFGTGLNGNGSNIFGAGNNSQSNTTGSLFGNQQSSAFGTNNQQGSLFGQQSQNTNNAFGNQNQLGGSSFGSKPVGSGSLFGQSNNTLGNTTNNRNGLFGQMNSSNQGSSNSGLFGQNSMNSSTQGVFGQNNNQMQINGNNNNSLFGKANTFSNSASGGLFGQNNQQQGSGLFGQNSQTSGSSGLFGQNNQKQPNTFTQSNTGIGLFGQNNNQQQQSTGLFGAKPAGTTGSLFGGNSSTQPNSLFGTTNVPTSNTQSQQGNSLFGATKLTNMPFGGNPTANQSGSGNSLFGTKPASTTGSLFGNNTASTTVPSTNGLFGNNANNSTSTTNTGLFGAKPDSQSKPALGGGLFGNSNSNSSTIGQNKPVFGGTTQNTGLFGATGTNSSAVGSTGKLFGQNNNTLNVGTQNVPPVNNTTQNALLGTTAVPSLQQAPVTNEQLFSKISIPNSITNPVKATTSKVNADMKRNSSLTSAYRLAPKPLFAPSSNGDAKFQKWGKTLERSDRGSSTSNSITDPESSYLNSNDLLFDPDRRYLKHLVIKNNKNLNVINHNDDEASKVKLVTFTTESASKDDQASSSIAASKLTEKAHSPQTDLKDDHDESTPDPQSKSPNGSTSIPMIENEKISSKVPGLLSNDVTFFKNNYYISPSIETLGNKSLIELRKINNLVIGHRNYGKVEFLEPVDLLNTPLDTLCGDLVTFGPKSCSIYENCSIKPEKGEGINVRCRVTLYSCFPIDKETRKPIKNITHPLLKRSIAKLKENPVYKFESYDPVTGTYSYTIDHPVLT.

The segment at 1–104 is disordered; sequence MFGNNRPMFG…NSSNASNGNT (104 aa). FG repeat units follow at residues 2-3, 9-10, and glycine 17; these read FG. Residues 12–36 are compositionally biased toward polar residues; that stretch reads SNLSFGSNTSSFGGQQSQQPNSLFG. Residues 21-24 form an SLFG 1; approximate repeat; it reads SSFG. The SLFG 2 repeat unit spans residues 33 to 36; that stretch reads SLFG. A compositionally biased stretch (low complexity) spans 37–48; sequence NSNNNNNSTSNN. The SLFG 3; approximate repeat unit spans residues 51-54; that stretch reads SGFG. Low complexity-rich tracts occupy residues 56–81 and 92–104; these read FTSAAGSNSNSLFGNNNTQNNGAFGQ and GSLNSSNASNGNT. An SLFG 4 repeat occupies 66–69; sequence SLFG. One copy of the GLFG 1; approximate repeat lies at 77–80; sequence GAFG. The stretch at 89–92 is one SLFG 5; approximate repeat; the sequence is SPFG. The stretch at 105 to 106 is one FG 4 repeat; sequence FG. A GLFG 2; approximate repeat occupies 112-115; it reads GSFG. The span at 121–136 shows a compositional bias: low complexity; the sequence is AFNNNSNSTNSPFGFN. Residues 121 to 172 are disordered; it reads AFNNNSNSTNSPFGFNKPNTGGTLFGSQNNNSAGTSSLFGGQSTSTTGTFGN. The stretch at 131–134 is one SLFG 6; approximate repeat; it reads SPFG. Residues 137–153 show a composition bias toward polar residues; it reads KPNTGGTLFGSQNNNSA. The stretch at 145 to 146 is one FG 5 repeat; the sequence is FG. The segment covering 154 to 172 has biased composition (low complexity); sequence GTSSLFGGQSTSTTGTFGN. An SLFG 7 repeat occupies 157–160; the sequence is SLFG. A GLFG 3; approximate repeat occupies 168-171; sequence GTFG. The stretch at 175–178 is one SLFG 8; approximate repeat; it reads SSFG. The FG 6 repeat unit spans residues 189 to 190; the sequence is FG. Positions 190 to 394 are disordered; it reads GAGNNSQSNT…NNQQQQSTGL (205 aa). Residues 192-245 show a composition bias toward polar residues; the sequence is GNNSQSNTTGSLFGNQQSSAFGTNNQQGSLFGQQSQNTNNAFGNQNQLGGSSFG. The stretch at 202 to 205 is one SLFG 9 repeat; the sequence is SLFG. The stretch at 210 to 213 is one SLFG 10; approximate repeat; the sequence is SAFG. The stretch at 220–223 is one SLFG 11 repeat; it reads SLFG. Residues 233–234 form an FG 7 repeat; the sequence is FG. Residues 242 to 245 form an SLFG 12; approximate repeat; that stretch reads SSFG. One copy of the SLFG 13 repeat lies at 253-256; sequence SLFG. The span at 259-293 shows a compositional bias: low complexity; that stretch reads NNTLGNTTNNRNGLFGQMNSSNQGSSNSGLFGQNS. GLFG repeat units lie at residues 271 to 274 and 287 to 290; these read GLFG. Residues 294 to 303 show a composition bias toward polar residues; the sequence is MNSSTQGVFG. Residues 300–303 form a GLFG 6; approximate repeat; sequence GVFG. A compositionally biased stretch (low complexity) spans 304–317; sequence QNNNQMQINGNNNN. An SLFG 14 repeat occupies 318-321; that stretch reads SLFG. 5 GLFG repeats span residues 333-336, 345-348, 358-361, 379-382, and 393-396; these read GLFG. Residues 336–352 are compositionally biased toward low complexity; it reads GQNNQQQGSGLFGQNSQ. Polar residues predominate over residues 353 to 377; that stretch reads TSGSSGLFGQNNQKQPNTFTQSNTG. SLFG repeat units lie at residues 405–408, 417–420, and 436–439; these read SLFG. An FG 8 repeat occupies 448-449; that stretch reads FG. The SLFG 18 repeat unit spans residues 462–465; sequence SLFG. The stretch at 474-477 is one SLFG 19; approximate repeat; the sequence is SLFG. GLFG repeat units lie at residues 490 to 493, 506 to 509, and 523 to 526; these read GLFG. One copy of the FG 9 repeat lies at 542–543; the sequence is FG. One copy of the GLFG 15 repeat lies at 550–553; sequence GLFG. One copy of the FG 10 repeat lies at 569-570; that stretch reads FG. Disordered regions lie at residues 672–697 and 745–794; these read TLERSDRGSSTSNSITDPESSYLNSN and DDQA…PMIE. Over residues 679–697 the composition is skewed to polar residues; that stretch reads GSSTSNSITDPESSYLNSN. Over residues 757–775 the composition is skewed to basic and acidic residues; the sequence is LTEKAHSPQTDLKDDHDES. 2 positions are modified to phosphoserine: serine 763 and serine 783. Polar residues predominate over residues 777 to 790; sequence PDPQSKSPNGSTSI. Residues 814 to 956 enclose the Peptidase S59 domain; the sequence is KNNYYISPSI…GTYSYTIDHP (143 aa). Residues 816–955 are nucleoporin RNA-binding motif (NRM); it reads NYYISPSIET…TGTYSYTIDH (140 aa).

Belongs to the nucleoporin GLFG family. As to quaternary structure, component of the nuclear pore complex (NPC). NPC constitutes the exclusive means of nucleocytoplasmic transport. NPCs allow the passive diffusion of ions and small molecules and the active, nuclear transport receptor-mediated bidirectional transport of macromolecules such as proteins, RNAs, ribonucleoparticles (RNPs), and ribosomal subunits across the nuclear envelope. Due to its 8-fold rotational symmetry, all subunits are present with 8 copies or multiples thereof. Through its FG repeats NUP100 interacts with numerous karyopherins including KAP95, and MEX67.

Its subcellular location is the nucleus. It localises to the nuclear pore complex. The protein resides in the nucleus membrane. In terms of biological role, functions as a component of the nuclear pore complex (NPC). NPC components, collectively referred to as nucleoporins (NUPs), can play the role of both NPC structural components and of docking or interaction partners for transiently associated nuclear transport factors. Active directional transport is assured by both, a Phe-Gly (FG) repeat affinity gradient for these transport factors across the NPC and a transport cofactor concentration gradient across the nuclear envelope (GSP1 and GSP2 GTPases associated predominantly with GTP in the nucleus, with GDP in the cytoplasm). NUP100 plays an important role in several nuclear export and import pathways including poly(A)+ RNA and protein transport. In Saccharomyces cerevisiae (strain ATCC 204508 / S288c) (Baker's yeast), this protein is Nucleoporin NUP100/NSP100 (NUP100).